Consider the following 162-residue polypeptide: Probable chemoreceptor glutamine deamidase CheD 3 (162 aa).

This sequence belongs to the CheD family.

It carries out the reaction L-glutaminyl-[protein] + H2O = L-glutamyl-[protein] + NH4(+). Its function is as follows. Probably deamidates glutamine residues to glutamate on methyl-accepting chemotaxis receptors (MCPs), playing an important role in chemotaxis. The protein is Probable chemoreceptor glutamine deamidase CheD 3 of Geobacter sulfurreducens (strain ATCC 51573 / DSM 12127 / PCA).